A 182-amino-acid chain; its full sequence is Methyl-CpG-binding domain-containing protein 5 (182 aa).

Disordered stretches follow at residues 1–56 and 80–126; these read MSNG…GTVD and HGTP…KPLN. One can recognise an MBD domain in the interval 25–101; the sequence is KRATPGDDNW…ENGDSHSEHS (77 aa). A compositionally biased stretch (basic and acidic residues) spans 92–105; that stretch reads ENGDSHSEHSEGRG. Positions 106 to 115 are enriched in basic residues; the sequence is SARRQTKSNK.

In terms of assembly, homodimer and heterodimer with MBD6. Interacts with DDM1 via its MBD domain. As to expression, mostly expressed in flowers, and, to a lower extent, in seedlings, buds, stems and mature seeds, but barely in roots, exclusively in root meristem cells at tips (at protein level).

It localises to the nucleus. It is found in the chromosome. Transcriptional regulator that binds CpG islands in promoters where the DNA is methylated at position 5 of cytosine within CpG dinucleotides. In addition, binds specifically methylated m(5)CpNpN but not m(5)CpNpG (N is A, T or C). Plays probably a role in gene silencing. The protein is Methyl-CpG-binding domain-containing protein 5 (MBD5) of Arabidopsis thaliana (Mouse-ear cress).